Here is a 157-residue protein sequence, read N- to C-terminus: Protein Smg (157 aa).

It belongs to the Smg family.

The protein is Protein Smg of Pectobacterium atrosepticum (strain SCRI 1043 / ATCC BAA-672) (Erwinia carotovora subsp. atroseptica).